We begin with the raw amino-acid sequence, 1693 residues long: MEAHQFIKAPGITTAIEQAALAAANSALANAVVVRPFLSHQQIEILINLMQPRQLVFRPEVFWNHPIQRVIHNELELYCRARSGRCLEIGAHPRSINDNPNVVHRCFLRPVGRDVQRWYTAPTRGPAANCRRSALRGLPAADRTYCLDGFSGCNFPAETGIALYSLHDMSPSDVAEAMFRHGMTRLYAALHLPPEVLLPPGTYRTASYLLIHDGRRVVVTYEGDTSAGYNHDVSNLRSWIRTTKVTGDHPLVIERVRAIGCHFVLLLTAAPEPSPMPYVPYPRSTEVYVRSIFGPGGTPSLFPTSCSTKSTFHAVPAHIWDRLMLFGATLDDQAFCCSRLMTYLRGISYKVTVGTLVANEGWNASEDALTAVITAAYLTICHQRYLRTQAISKGMRRLEREHAQKFITRLYSWLFEKSGRDYIPGRQLEFYAQCRRWLSAGFHLDPRVLVFDESAPCHCRTAIRKALSKFCCFMKWLGQECTCFLQPAEGAVGDQGHDNEAYEGSDVDPAESAISDISGSYVVPGTALQPLYQALDLPAEIVARAGRLTATVKVSQVDGRIDCETLLGNKTFRTSFVDGAVLETNGPERHNLSFDASQSTMAAGPFSLTYAASAAGLEVRYVAAGLDHRAVFAPGVSPRSAPGEVTAFCSALYRFNREAQRHSLIGNLWFHPEGLIGLFAPFSPGHVWESANPFCGESTLYTRTWSEVDAVSSPARPDLGFMSEPSIPSRAATPTLAAPLPPPAPDPSPPPSAPALAEPASGATAGAPAITHQTARHRRLLFTYPDGSKVFAGSLFESTCTWLVNASNVDHRPGGGLCHAFYQRYPASFDAASFVMRDGAAAYTLTPRPIIHAVAPDYRLEHNPKRLEAAYRETCSRLGTAAYPLLGTGIYQVPIGPSFDAWERNHRPGDELYLPELAARWFEANRPTRPTLTITEDVARTANLAIELDSATDVGRACAGCRVTPGVVQYQFTAGVPGSGKSRSITQADVDVVVVPTRELRNAWRRRGFAAFTPHTAARVTQGRRVVIDEAPSLPPHLLLLHMQRAATVHLLGDPNQIPAIDFEHAGLVPAIRPDLGPTSWWHVTHRWPADVCELIRGAYPMIQTTSRVLRSLFWGEPAVGQKLVFTQAAKPANPGSVTVHEAQGATYTETTIIATADARGLIQSSRAHAIVALTRHTEKCVIIDAPGLLREVGISDAIVNNFFLAGGEIGHQRPSVIPRGNPDANVDTLAAFPPSCQISAFHQLAEELGHRPVPVAAVLPPCPELEQGLLYLPQELTTCDSVVTFELTDIVHCRMAAPSQRKAVLSTLVGRYGGRTKLYNASHSDVRDSLARFIPAIGPVQVTTCELYELVEAMVEKGQDGSAVLELDLCNRDVSRITFFQKDCNKFTTGETIAHGKVGQGISAWSKTFCALFGPWFRAIEKAILALLPQGVFYGDAFDDTVFSAAVAAAKASMVFENDFSEFDSTQNNFSLGLECAIMEECGMPQWLIRLYHLIRSAWILQAPKESLRGFWKKHSGEPGTLLWNTVWNMAVITHCYDFRDFQVAAFKGDDSIVLCSEYRQSPGAAVLIAGCGLKLKVDFRPIGLYAGVVVAPGLGALPDVVRFAGRLTEKNWGPGPERAEQLRLAVSDFLRKLTNVAQMCVDVVSRVYGVSPGLVHNLIGMLQAVADGKAHFTESVKPVLDLTNSILCRVE.

Positions 56 to 240 (VFRPEVFWNH…HDVSNLRSWI (185 aa)) constitute an Alphavirus-like MT domain. The methyltransferase stretch occupies residues 60-240 (EVFWNHPIQR…HDVSNLRSWI (181 aa)). The segment at 241–439 (RTTKVTGDHP…FYAQCRRWLS (199 aa)) is Y-domain. C434 and C481 form a disulfide bridge. Residues 442–509 (FHLDPRVLVF…EAYEGSDVDP (68 aa)) form a putative protease region. The segment at 510–691 (AESAISDISG…FSPGHVWESA (182 aa)) is zinc-binding. The Zn(2+) site is built by H671, E673, and H686. Positions 712 to 778 (SSPARPDLGF…AITHQTARHR (67 aa)) are hinge. The disordered stretch occupies residues 732–768 (ATPTLAAPLPPPAPDPSPPPSAPALAEPASGATAGAP). Residues 739 to 753 (PLPPPAPDPSPPPSA) show a composition bias toward pro residues. A compositionally biased stretch (low complexity) spans 754 to 768 (PALAEPASGATAGAP). The region spanning 775-921 (ARHRRLLFTY…LYLPELAARW (147 aa)) is the Macro domain. Residues 785–942 (PDGSKVFAGS…TITEDVARTA (158 aa)) are X-domain. A (+)RNA virus helicase ATP-binding domain is found at 934–1082 (ITEDVARTAN…RPDLGPTSWW (149 aa)). Residues 960-1204 (GCRVTPGVVQ…ISDAIVNNFF (245 aa)) are NTPase/helicase. 975–982 (GVPGSGKS) lines the ATP pocket. The (+)RNA virus helicase C-terminal domain maps to 1083–1216 (HVTHRWPADV…GGEIGHQRPS (134 aa)). The tract at residues 1207-1693 (GGEIGHQRPS…LTNSILCRVE (487 aa)) is RNA-directed RNA polymerase. Residues 1454–1565 (SMVFENDFSE…LCSEYRQSPG (112 aa)) enclose the RdRp catalytic domain.

This sequence belongs to the hepevirus non-structural polyprotein family. In terms of assembly, the protease domain interacts with host EIF2AK4 (via C-terminus); this interaction inhibits dimerization of EIF2AK4 and prevents EIF2AK4-mediated phosphorylation of host EIF2A. The cofactor is Mg(2+). Post-translationally, ORF1 polyprotein does not seem to be processed into distinct enzymatic domains by a viral protease belonging to ORF1, but could be processed by a host serine protease like thrombin.

The protein resides in the host cytoplasm. It is found in the host perinuclear region. It catalyses the reaction RNA(n) + a ribonucleoside 5'-triphosphate = RNA(n+1) + diphosphate. The catalysed reaction is GTP + S-adenosyl-L-methionine = N(7)-methyl-GTP + S-adenosyl-L-homocysteine. Putative protease: Inhibited by chymostatin. Its function is as follows. Methyltransferase: Displays a capping enzyme activity. This function is necessary since all viral RNAs are synthesized in the cytoplasm, and host capping enzymes are restricted to the nucleus. The enzymatic reaction involves a covalent link between 7-methyl-GMP and the methyltransferase, whereas eukaryotic capping enzymes form a covalent complex only with GMP. Methyltransferase catalyzes transfer of a methyl group from S-adenosylmethionine to GTP and GDP to yield m(7)GTP or m(7)GDP. GDP is a better substrate than GTP. This enzyme also displays guanylyltransferase activity to form a covalent complex, methyltransferase-m(7)GMP, from which 7-methyl-GMP is transferred to the mRNA to create the cap structure. Functionally, Y-domain: Indispensable for virus replication. Putative protease: The putative protease domain although necessary for replication of the virus may not be a protease but rather a structural Zn(2+)-binding domain. Inhibits induction of IFN-beta by MDA5 and RIG-I pathways and down-regulates the expression of MDA5. In terms of biological role, NTPase/helicase: Multi-functional protein that exhibits NTPase and RNA unwinding activities. Hydrolyzes all NTPs efficiently and unwinds RNA duplexes containing 5' overhangs. Possesses a sequence independent RNA-5'-triphosphatase (RTPase) activity suggestive of its role in forming viral cap structure. Also participates in viral genome replication, RNA translocation and genome packaging/unpackaging. Its function is as follows. RNA-directed RNA polymerase: Plays an essential role in the virus replication. Binds to the 3'-end of the genomic RNA to initiate viral replication. This Homo sapiens (Human) protein is Non-structural polyprotein pORF1.